A 200-amino-acid polypeptide reads, in one-letter code: Recombination protein RecR (200 aa).

A C4-type zinc finger spans residues 59–74 (CSTCGNIDSQNPCTVC). In terms of domain architecture, Toprim spans 82-177 (SIIVVVADVA…KVTRLAHGVP (96 aa)).

The protein belongs to the RecR family.

Its function is as follows. May play a role in DNA repair. It seems to be involved in an RecBC-independent recombinational process of DNA repair. It may act with RecF and RecO. This is Recombination protein RecR from Rhodopseudomonas palustris (strain ATCC BAA-98 / CGA009).